The primary structure comprises 892 residues: Alanine--tRNA ligase (892 aa).

Zn(2+) is bound by residues His-577, His-581, Cys-680, and His-684.

It belongs to the class-II aminoacyl-tRNA synthetase family. It depends on Zn(2+) as a cofactor.

The protein localises to the cytoplasm. It catalyses the reaction tRNA(Ala) + L-alanine + ATP = L-alanyl-tRNA(Ala) + AMP + diphosphate. Its function is as follows. Catalyzes the attachment of alanine to tRNA(Ala) in a two-step reaction: alanine is first activated by ATP to form Ala-AMP and then transferred to the acceptor end of tRNA(Ala). Also edits incorrectly charged Ser-tRNA(Ala) and Gly-tRNA(Ala) via its editing domain. In Arthrobacter sp. (strain FB24), this protein is Alanine--tRNA ligase.